Here is a 131-residue protein sequence, read N- to C-terminus: Peptide methionine sulfoxide reductase MsrB (131 aa).

The MsrB domain maps to 8-130; it reads LEEWRAMLDP…NSVCLDLKPR (123 aa). 4 residues coordinate Zn(2+): Cys47, Cys50, Cys96, and Cys99. The active-site Nucleophile is the Cys119.

This sequence belongs to the MsrB Met sulfoxide reductase family. Requires Zn(2+) as cofactor.

The catalysed reaction is L-methionyl-[protein] + [thioredoxin]-disulfide + H2O = L-methionyl-(R)-S-oxide-[protein] + [thioredoxin]-dithiol. This is Peptide methionine sulfoxide reductase MsrB from Pseudomonas entomophila (strain L48).